The primary structure comprises 397 residues: Elongation factor Tu (397 aa).

The tr-type G domain maps to 10 to 206; it reads KPHVNIGTIG…ACDDYIPEPV (197 aa). Residues 19-26 form a G1 region; sequence GHIDHGKT. 19-26 provides a ligand contact to GTP; sequence GHIDHGKT. Threonine 26 contacts Mg(2+). Residues 62 to 66 are G2; it reads GITIS. The segment at 83-86 is G3; it reads DCPG. GTP contacts are provided by residues 83 to 87 and 138 to 141; these read DCPGH and NKAD. A G4 region spans residues 138–141; it reads NKAD. The tract at residues 176–178 is G5; the sequence is SAL.

This sequence belongs to the TRAFAC class translation factor GTPase superfamily. Classic translation factor GTPase family. EF-Tu/EF-1A subfamily. Monomer.

It localises to the cytoplasm. It catalyses the reaction GTP + H2O = GDP + phosphate + H(+). In terms of biological role, GTP hydrolase that promotes the GTP-dependent binding of aminoacyl-tRNA to the A-site of ribosomes during protein biosynthesis. The sequence is that of Elongation factor Tu from Acidothermus cellulolyticus (strain ATCC 43068 / DSM 8971 / 11B).